Consider the following 361-residue polypeptide: Aromatic amino acid aminotransferase (361 aa).

Lysine 215 carries the N6-(pyridoxal phosphate)lysine modification.

This sequence belongs to the class-II pyridoxal-phosphate-dependent aminotransferase family. As to quaternary structure, homodimer. Pyridoxal 5'-phosphate serves as cofactor.

The catalysed reaction is an aromatic L-alpha-amino acid + 2-oxoglutarate = an aromatic oxo-acid + L-glutamate. Aminotransferase that catalyzes the conversion of aromatic amino acids and 2-oxoglutarate into corresponding aromatic oxo acids and L-glutamate. In Mycolicibacterium smegmatis (strain ATCC 700084 / mc(2)155) (Mycobacterium smegmatis), this protein is Aromatic amino acid aminotransferase.